The primary structure comprises 357 residues: MSEPAFFPLPTPLTLDEVAALSGARLARPGAQDALRLTGVGTLADAGPSELAFLDQSRYLATLGTARAGAIITSEKFAGEVPEAIAVLVSPRPASAFVAVTRQLFPQALRPQPVFGHTGIAPGAFIHPTASLEAGVTVDPGAVIGPGAEVGAGSVICANAVVGAGVRIGRDSTIGAGVSLSHALVGNRVIVHAGARIGQDGFGYQPGPGGHLKVPQIGRVVLQDDVEVGAGSTIDRGALRDTVIGEGTKIDNLVQIAHNVVIGRHCIIVSQTGISGSTTLGDFVMLGGQVGVVGHCTIGDGAQIAASSNVKGDVPPGVRWGGSPAKPVREWFREMTTLKKLAESRARSGAATPGEEE.

The active-site Proton acceptor is the H258.

It belongs to the transferase hexapeptide repeat family. LpxD subfamily. In terms of assembly, homotrimer.

The enzyme catalyses a UDP-3-O-[(3R)-3-hydroxyacyl]-alpha-D-glucosamine + a (3R)-hydroxyacyl-[ACP] = a UDP-2-N,3-O-bis[(3R)-3-hydroxyacyl]-alpha-D-glucosamine + holo-[ACP] + H(+). Its pathway is bacterial outer membrane biogenesis; LPS lipid A biosynthesis. Catalyzes the N-acylation of UDP-3-O-acylglucosamine using 3-hydroxyacyl-ACP as the acyl donor. Is involved in the biosynthesis of lipid A, a phosphorylated glycolipid that anchors the lipopolysaccharide to the outer membrane of the cell. This chain is UDP-3-O-acylglucosamine N-acyltransferase, found in Azorhizobium caulinodans (strain ATCC 43989 / DSM 5975 / JCM 20966 / LMG 6465 / NBRC 14845 / NCIMB 13405 / ORS 571).